Here is a 307-residue protein sequence, read N- to C-terminus: Mitochondrial brown fat uncoupling protein 1 (307 aa).

Over 1–10 (MVSLTTSEVH) the chain is Mitochondrial intermembrane. The helical transmembrane segment at 11–32 (PTMGVKTFSAGISACLADIITF) threads the bilayer. 3 Solcar repeats span residues 11 to 102 (PTMG…VQEY), 111 to 201 (PTLG…MKGA), and 210 to 295 (DDVP…LKKE). Over 33–73 (PLDTAKVRLQIQGEGQTSSTIRYKGVLGTITTLAKTEGWPK) the chain is Mitochondrial matrix. K56 contacts fatty acid 16:0. A helical membrane pass occupies residues 74–96 (LYSGLPAGIQRQISFASLRIGLY). At 97 to 116 (DTVQEYFSSGKETPPTLGNR) the chain is on the mitochondrial intermembrane side. Residues 117–133 (ISAGLMTGGVAVFIGQP) form a helical membrane-spanning segment. Residues 134–178 (TEVVKVRLQAQSHLHGIKPRYTGTYNAYRIIATTESFSTLWKGTT) lie on the Mitochondrial matrix side of the membrane. The helical transmembrane segment at 179-195 (PNLMRNVIINRTELVTY) threads the bilayer. Over 196–212 (DLMKGALVNNQILADDV) the chain is Mitochondrial intermembrane. The chain crosses the membrane as a helical span at residues 213 to 232 (PCHLLSALVAGFCTTFLASP). The Mitochondrial matrix portion of the chain corresponds to 233–266 (ADVVKTRFINSLPGQYPSVPSCAMTMLTKEGPTA). The residue at position 254 (C254) is a Cysteine sulfenic acid (-SOH). Residues 267–289 (FFKGFVPSFLRLASWNVIMFVCF) traverse the membrane as a helical segment. Fatty acid 16:0 is bound at residue K269. Residues 290 to 307 (EQLKKELMKSRQTMDCTT) are Mitochondrial intermembrane-facing.

Belongs to the mitochondrial carrier (TC 2.A.29) family. As to quaternary structure, most probably functions as a monomer. Binds one purine nucleotide per monomer. However, has also been suggested to function as a homodimer or a homotetramer. Tightly associates with cardiolipin in the mitochondrion inner membrane; may stabilize and regulate its activity. Post-translationally, may undergo sulfenylation upon cold exposure. May increase the sensitivity of UCP1 thermogenic function to the activation by noradrenaline probably through structural effects. May undergo ubiquitin-mediated proteasomal degradation.

It is found in the mitochondrion inner membrane. The catalysed reaction is H(+)(in) = H(+)(out). Has no constitutive proton transporter activity and has to be activated by long-chain fatty acids/LCFAs. Inhibited by purine nucleotides. Both purine nucleotides and LCFAs bind the cytosolic side of the transporter and directly compete to activate or inhibit it. Activated by noradrenaline and reactive oxygen species. Despite lacking canonical translational encoding for selenocysteine, a small pool of the protein has been observed to selectively incorporate selenocysteine at 'Cys-254'. Selenocysteine-modified protein is highly sensitive to redox modification and may constitute a pool of protein highly sensitive to activation by elevated levels of reactive oxygen species (ROS). Mitochondrial protein responsible for thermogenic respiration, a specialized capacity of brown adipose tissue and beige fat that participates in non-shivering adaptive thermogenesis to temperature and diet variations and more generally to the regulation of energy balance. Functions as a long-chain fatty acid/LCFA and proton symporter, simultaneously transporting one LCFA and one proton through the inner mitochondrial membrane. However, LCFAs remaining associated with the transporter via their hydrophobic tails, it results in an apparent transport of protons activated by LCFAs. Thereby, dissipates the mitochondrial proton gradient and converts the energy of substrate oxydation into heat instead of ATP. Regulates the production of reactive oxygen species/ROS by mitochondria. The protein is Mitochondrial brown fat uncoupling protein 1 of Dicrostonyx groenlandicus (Northern collared lemming).